The chain runs to 799 residues: Ribosome-releasing factor 2, mitochondrial (799 aa).

In terms of domain architecture, tr-type G spans 19–306 (SKIRNIGIIA…AVVNYLPSPL (288 aa)). Residues 28-35 (AHIDAGKT), 93-97 (DTPGH), and 145-148 (NKMD) each bind GTP.

The protein belongs to the TRAFAC class translation factor GTPase superfamily. Classic translation factor GTPase family. EF-G/EF-2 subfamily.

Its subcellular location is the mitochondrion. Functionally, mitochondrial GTPase that mediates the disassembly of ribosomes from messenger RNA at the termination of mitochondrial protein biosynthesis. Not involved in the GTP-dependent ribosomal translocation step during translation elongation. The sequence is that of Ribosome-releasing factor 2, mitochondrial from Vanderwaltozyma polyspora (strain ATCC 22028 / DSM 70294 / BCRC 21397 / CBS 2163 / NBRC 10782 / NRRL Y-8283 / UCD 57-17) (Kluyveromyces polysporus).